The chain runs to 287 residues: Pyridoxal kinase PdxY (287 aa).

Substrate is bound by residues Ser10 and 45 to 46; that span reads TQ. ATP-binding positions include Asp112, Ala144, Glu149, Lys182, and 209–212; that span reads RPLV. A substrate-binding site is contributed by Asp224.

The protein belongs to the pyridoxine kinase family. PdxY subfamily. In terms of assembly, homodimer. The cofactor is Mg(2+).

The enzyme catalyses pyridoxal + ATP = pyridoxal 5'-phosphate + ADP + H(+). It functions in the pathway cofactor metabolism; pyridoxal 5'-phosphate salvage; pyridoxal 5'-phosphate from pyridoxal: step 1/1. Pyridoxal kinase involved in the salvage pathway of pyridoxal 5'-phosphate (PLP). Catalyzes the phosphorylation of pyridoxal to PLP. The protein is Pyridoxal kinase PdxY of Shigella flexneri.